Here is a 313-residue protein sequence, read N- to C-terminus: tRNA uridine(34) hydroxylase (313 aa).

One can recognise a Rhodanese domain in the interval 124–218 (SDPEVLLIDT…YLEEVPQEET (95 aa)). Cysteine 178 functions as the Cysteine persulfide intermediate in the catalytic mechanism.

Belongs to the TrhO family.

It catalyses the reaction uridine(34) in tRNA + AH2 + O2 = 5-hydroxyuridine(34) in tRNA + A + H2O. Its function is as follows. Catalyzes oxygen-dependent 5-hydroxyuridine (ho5U) modification at position 34 in tRNAs. This is tRNA uridine(34) hydroxylase from Pseudomonas fluorescens (strain Pf0-1).